Consider the following 264-residue polypeptide: Thymidylate synthase (264 aa).

A dUMP-binding site is contributed by R21. H51 is a (6R)-5,10-methylene-5,6,7,8-tetrahydrofolate binding site. Position 126–127 (126–127 (RR)) interacts with dUMP. C146 functions as the Nucleophile in the catalytic mechanism. Residues 166 to 169 (RSGD), N177, and 207 to 209 (HLY) each bind dUMP. D169 serves as a coordination point for (6R)-5,10-methylene-5,6,7,8-tetrahydrofolate. A263 contacts (6R)-5,10-methylene-5,6,7,8-tetrahydrofolate.

This sequence belongs to the thymidylate synthase family. Bacterial-type ThyA subfamily. As to quaternary structure, homodimer.

Its subcellular location is the cytoplasm. It catalyses the reaction dUMP + (6R)-5,10-methylene-5,6,7,8-tetrahydrofolate = 7,8-dihydrofolate + dTMP. Its pathway is pyrimidine metabolism; dTTP biosynthesis. In terms of biological role, catalyzes the reductive methylation of 2'-deoxyuridine-5'-monophosphate (dUMP) to 2'-deoxythymidine-5'-monophosphate (dTMP) while utilizing 5,10-methylenetetrahydrofolate (mTHF) as the methyl donor and reductant in the reaction, yielding dihydrofolate (DHF) as a by-product. This enzymatic reaction provides an intracellular de novo source of dTMP, an essential precursor for DNA biosynthesis. In Xanthomonas oryzae pv. oryzae (strain MAFF 311018), this protein is Thymidylate synthase.